We begin with the raw amino-acid sequence, 372 residues long: MQSVIHSAHRIVVKVGSSLVTNDGAGLDHAALERWASEIADLMRRGKEVVLVSSGAIAEGIKRLGWSAKPSAVHEKQAAAAVGQMGLCEAYERVFTAHNLKTAQVLLTHEDMADRTRYLNARTTLLTLLSLNVVPIINENDTVVTSEIKLGDNDTLGALVTNLIEADALVILTDQQGLYTADPRKHPDAEFVHEACAGNPELEAMAGGAGSSVGTGGMLTKILAAKRAARSGATTVIACGREANVLSRLADGEAIGTQLVAQNDRWAARKQWLADHLRLAGRLVLDDGAARAVTARHTSLLPIGVIAVEGEFLRGDAVACVNSDGREVARGLANYSSDEARMIMRHPTRDIERLLGYVGEPELIHRDNLVNL.

K14 provides a ligand contact to ATP. 3 residues coordinate substrate: S54, D141, and N153. Residues 173-174 (TD) and 215-221 (TGGMLTK) contribute to the ATP site. Residues 280-358 (AGRLVLDDGA…RDIERLLGYV (79 aa)) form the PUA domain.

Belongs to the glutamate 5-kinase family.

The protein resides in the cytoplasm. The enzyme catalyses L-glutamate + ATP = L-glutamyl 5-phosphate + ADP. The protein operates within amino-acid biosynthesis; L-proline biosynthesis; L-glutamate 5-semialdehyde from L-glutamate: step 1/2. Functionally, catalyzes the transfer of a phosphate group to glutamate to form L-glutamate 5-phosphate. The polypeptide is Glutamate 5-kinase (Laribacter hongkongensis (strain HLHK9)).